A 20-amino-acid chain; its full sequence is Dahlein-5.1 (20 aa).

As to expression, expressed by the skin dorsal glands.

It localises to the secreted. Functionally, has no antimicrobial activity. Strongly inhibits the formation of NO by neuronal nitric oxide synthase at micromolar concentrations. Acts by a non-competitive mechanism, probably by binding to calcium/calmodulin and as a consequence blocking calmodulin attachment to nNOS. The protein is Dahlein-5.1 of Ranoidea dahlii (Dahl's aquatic frog).